The primary structure comprises 691 residues: Proprotein convertase subtilisin/kexin type 9 (691 aa).

Residues 1-30 form the signal peptide; that stretch reads MGIRCSTWLRWPLSPQLLLLLLLCPTGSRA. A propeptide spanning residues 31–151 is cleaved from the precursor; that stretch reads QDEDGDYEEL…IEEDSLVFAQ (121 aa). Position 37 is a sulfotyrosine (Tyr-37). The residue at position 46 (Ser-46) is a Phosphoserine. A Peptidase S8 domain is found at 154–441; that stretch reads PWNLERIIPA…QRVLTPNRVA (288 aa). Active-site charge relay system residues include Asp-185 and His-225. 2 disulfides stabilise this stretch: Cys-222–Cys-254 and Cys-322–Cys-357. Ser-385 functions as the Charge relay system in the catalytic mechanism. The segment at 449 to 691 is C-terminal domain; that stretch reads ETGGQLLCRT…PSAKASWVHQ (243 aa). Cystine bridges form between Cys-456-Cys-526, Cys-476-Cys-525, and Cys-485-Cys-508. The Cell attachment site motif lies at 495-497; sequence RGD. An N-linked (GlcNAc...) asparagine glycan is attached at Asn-532. 6 disulfide bridges follow: Cys-533–Cys-600, Cys-551–Cys-599, Cys-561–Cys-587, Cys-607–Cys-678, Cys-625–Cys-677, and Cys-634–Cys-653. The residue at position 687 (Ser-687) is a Phosphoserine.

This sequence belongs to the peptidase S8 family. Monomer. Can self-associate to form dimers and higher multimers which may have increased LDLR degrading activity. The precursor protein but not the mature protein may form multimers. Interacts with APOB, VLDLR, LRP8/APOER2 and BACE1. The full-length immature form (pro-PCSK9) interacts with SCNN1A, SCNN1B and SCNN1G. The pro-PCSK9 form (via C-terminal domain) interacts with LDLR. Interacts (via the C-terminal domain) with ANXA2 (via repeat Annexin 1); the interaction inhibits the degradation of LDLR. The cofactor is Ca(2+). Post-translationally, cleavage by furin and PCSK5 generates a truncated inactive protein that is unable to induce LDLR degradation. In terms of processing, undergoes autocatalytic cleavage in the endoplasmic reticulum to release the propeptide from the N-terminus and the cleavage of the propeptide is strictly required for its maturation and activation. The cleaved propeptide however remains associated with the catalytic domain through non-covalent interactions, preventing potential substrates from accessing its active site. As a result, it is secreted from cells as a propeptide-containing, enzymatically inactive protein. Phosphorylation protects the propeptide against proteolysis. Highly expressed in 12-day embryo. In the adult, strongly expressed in liver, small intestine, jejunum, and to a lesser extent in kidney, lung, spleen and thymus. Expression in the liver is up-regulated following partial hepatectomy.

The protein localises to the cytoplasm. It is found in the secreted. The protein resides in the endosome. Its subcellular location is the lysosome. It localises to the cell surface. The protein localises to the endoplasmic reticulum. It is found in the golgi apparatus. Its activity is regulated as follows. Its proteolytic activity is autoinhibited by the non-covalent binding of the propeptide to the catalytic domain. Inhibited by EGTA. Its function is as follows. Crucial player in the regulation of plasma cholesterol homeostasis. Binds to low-density lipid receptor family members: low density lipoprotein receptor (LDLR), very low density lipoprotein receptor (VLDLR), apolipoprotein E receptor (LRP1/APOER) and apolipoprotein receptor 2 (LRP8/APOER2), and promotes their degradation in intracellular acidic compartments. Acts via a non-proteolytic mechanism to enhance the degradation of the hepatic LDLR through a clathrin LDLRAP1/ARH-mediated pathway. May prevent the recycling of LDLR from endosomes to the cell surface or direct it to lysosomes for degradation. Can induce ubiquitination of LDLR leading to its subsequent degradation. Inhibits intracellular degradation of APOB via the autophagosome/lysosome pathway in a LDLR-independent manner. Involved in the disposal of non-acetylated intermediates of BACE1 in the early secretory pathway. Inhibits epithelial Na(+) channel (ENaC)-mediated Na(+) absorption by reducing ENaC surface expression primarily by increasing its proteasomal degradation. Regulates neuronal apoptosis via modulation of LRP8/APOER2 levels and related anti-apoptotic signaling pathways. This Rattus norvegicus (Rat) protein is Proprotein convertase subtilisin/kexin type 9 (Pcsk9).